The following is a 105-amino-acid chain: UPF0060 membrane protein Reut_B3679 (105 aa).

The next 4 membrane-spanning stretches (helical) occupy residues 4-24, 28-48, 60-80, and 82-102; these read IALY…PYLW, GASA…AWLL, AAYG…VDGV, and PSAW…IIVF.

This sequence belongs to the UPF0060 family.

The protein localises to the cell inner membrane. The polypeptide is UPF0060 membrane protein Reut_B3679 (Cupriavidus pinatubonensis (strain JMP 134 / LMG 1197) (Cupriavidus necator (strain JMP 134))).